The sequence spans 954 residues: Valine--tRNA ligase (954 aa).

Positions 48-58 match the 'HIGH' region motif; sequence PNVTGSLHMGH. Residues 560-564 carry the 'KMSKS' region motif; the sequence is KMSKS. Residue K563 participates in ATP binding. Positions 886–954 form a coiled coil; the sequence is INKDTELARL…RAQYLSIENL (69 aa).

It belongs to the class-I aminoacyl-tRNA synthetase family. ValS type 1 subfamily. In terms of assembly, monomer.

The protein resides in the cytoplasm. It carries out the reaction tRNA(Val) + L-valine + ATP = L-valyl-tRNA(Val) + AMP + diphosphate. Its function is as follows. Catalyzes the attachment of valine to tRNA(Val). As ValRS can inadvertently accommodate and process structurally similar amino acids such as threonine, to avoid such errors, it has a 'posttransfer' editing activity that hydrolyzes mischarged Thr-tRNA(Val) in a tRNA-dependent manner. The chain is Valine--tRNA ligase from Mannheimia succiniciproducens (strain KCTC 0769BP / MBEL55E).